A 363-amino-acid chain; its full sequence is Peptide-N(4)-(N-acetyl-beta-glucosaminyl)asparagine amidase (363 aa).

Zn(2+) is bound by residues C129, C132, C165, and C168. C191 acts as the Nucleophile in catalysis. Catalysis depends on residues H218 and D235. E238 is a binding site for substrate. Residues 325-363 (RGKTQETKSESVSAASKSSNRGRESGSADWKAQRGEDGK) form a disordered region. Over residues 334–343 (ESVSAASKSS) the composition is skewed to low complexity. Residues 345–363 (RGRESGSADWKAQRGEDGK) show a composition bias toward basic and acidic residues.

The protein belongs to the transglutaminase-like superfamily. PNGase family. As to quaternary structure, interacts with RAD23 subunit of 26S proteasome. Requires Zn(2+) as cofactor.

The protein localises to the cytoplasm. It localises to the nucleus. The catalysed reaction is Hydrolysis of an N(4)-(acetyl-beta-D-glucosaminyl)asparagine residue in which the glucosamine residue may be further glycosylated, to yield a (substituted) N-acetyl-beta-D-glucosaminylamine and a peptide containing an aspartate residue.. Its activity is regulated as follows. Inhibited by Z-VAD-fmk, a well-known caspase inhibitor. Also inhibited by Man9GlcNAc2-iodoacetoamide. Both molecules inhibit enzyme activity through covalent binding of the carbohydrate to the single Cys-191 residue. Its function is as follows. Specifically deglycosylates the denatured form of N-linked glycoproteins in the cytoplasm and assists their proteasome-mediated degradation. Cleaves the beta-aspartyl-glucosamine (GlcNAc) of the glycan and the amide side chain of Asn, converting Asn to Asp. Prefers proteins containing high-mannose over those bearing complex type oligosaccharides. Can recognize misfolded proteins in the endoplasmic reticulum that are exported to the cytosol to be destroyed and deglycosylate them, while it has no activity toward native proteins. Deglycosylation is a prerequisite for subsequent proteasome-mediated degradation of some, but not all, misfolded glycoproteins. Involved in the formation of free oligosaccharide in cytosol. This is Peptide-N(4)-(N-acetyl-beta-glucosaminyl)asparagine amidase (PNG1) from Saccharomyces cerevisiae (strain ATCC 204508 / S288c) (Baker's yeast).